We begin with the raw amino-acid sequence, 27 residues long: Trypsin inhibitor 1 (27 aa).

In terms of assembly, homodimer. Post-translationally, contains disulfide bonds. Glycosylated.

In terms of biological role, inhibits trypsin (IC(50)=1.25 uM) but not chymotrypsin or papain. Has antibacterial activity against S.enterica ATCC 10708 (MIC=5 ug/ml) and S.aureus ATCC 25923 (MIC=5 ug/ml) but not against B.subtilis ATCC 6633 or P.aeruginosa ATCC 25619. Has no hemolytic activity against human erythrocytes. Is not toxic to mice. In Jatropha curcas (Barbados nut), this protein is Trypsin inhibitor 1.